Consider the following 537-residue polypeptide: Phosphoenolpyruvate carboxykinase (ATP) (537 aa).

3 residues coordinate substrate: Arg-61, Tyr-195, and Lys-201. Residues Lys-201, His-220, and 236–244 each bind ATP; that span reads GLSGTGKTT. Residues Lys-201 and His-220 each contribute to the Mn(2+) site. Asp-257 provides a ligand contact to Mn(2+). Residues Glu-285, Arg-323, and Thr-448 each contribute to the ATP site. Residue Arg-323 coordinates substrate.

It belongs to the phosphoenolpyruvate carboxykinase (ATP) family. Requires Mn(2+) as cofactor.

The protein resides in the cytoplasm. The catalysed reaction is oxaloacetate + ATP = phosphoenolpyruvate + ADP + CO2. It functions in the pathway carbohydrate biosynthesis; gluconeogenesis. Its function is as follows. Involved in the gluconeogenesis. Catalyzes the conversion of oxaloacetate (OAA) to phosphoenolpyruvate (PEP) through direct phosphoryl transfer between the nucleoside triphosphate and OAA. This chain is Phosphoenolpyruvate carboxykinase (ATP), found in Rhodopseudomonas palustris (strain HaA2).